We begin with the raw amino-acid sequence, 150 residues long: Keratin-associated protein 15-1 (150 aa).

It belongs to the PMG family. In terms of assembly, interacts with hair keratins. Expressed at high levels in skin and at lower levels in the developing mammary gland.

Its function is as follows. In the hair cortex, hair keratin intermediate filaments are embedded in an interfilamentous matrix, consisting of hair keratin-associated proteins (KRTAP), which are essential for the formation of a rigid and resistant hair shaft through their extensive disulfide bond cross-linking with abundant cysteine residues of hair keratins. The matrix proteins include the high-sulfur and high-glycine-tyrosine keratins. The chain is Keratin-associated protein 15-1 from Mus musculus (Mouse).